A 1103-amino-acid chain; its full sequence is Detocs histidine-protein kinase DtcA (1103 aa).

H758 bears the Phosphohistidine; by autocatalysis mark. One copy of the TPR repeat lies at 818 to 851 (TIINDAKEKVHINTGEFIESAKVFNYAIEIEFVE).

Autophosphorylated.

It catalyses the reaction ATP + protein L-histidine = ADP + protein N-phospho-L-histidine.. Functionally, sensor-kinase member of the two-component regulatory system Detocs that confers resistance to bacteriophage. When the system (DtcA-DtcB-DtcC) is expressed in a susceptible E.coli (strain MG1655) it confers resistance to bacteriophages T2, T4, T5, T7, SECphi4, SECphi6 and SECphi27; the level of resistance varies, resistance to T2, T7 and SECphi4 is not very high. DtcA (this subunit) probably autophosphorylates upon sensing viral infection, and subsequently transfers the phosphate signal to DtcC which activates it, leading to an antiviral defense; DtcB may scavenge phosphorylation signals from accidental activation of DtcA. The protein is Detocs histidine-protein kinase DtcA of Enterobacter cloacae (strain JD6301).